We begin with the raw amino-acid sequence, 273 residues long: Karrikin insensitive 2 receptor B (273 aa).

Ser-95 serves as the catalytic Nucleophile. Asp-217 is an active-site residue.

The protein belongs to the AB hydrolase superfamily. In terms of tissue distribution, expressed in stigma.

Its subcellular location is the nucleus. It is found in the cytoplasm. Functionally, may be involved in plant olfaction during volatile communication. This Petunia hybrida (Petunia) protein is Karrikin insensitive 2 receptor B.